Consider the following 337-residue polypeptide: F420-dependent glucose-6-phosphate dehydrogenase (337 aa).

Asp-40 contributes to the coenzyme F420-(gamma-Glu)n binding site. His-41 serves as the catalytic Proton donor. Coenzyme F420-(gamma-Glu)n is bound by residues Thr-77 and 108–109 (TG). Glu-110 (proton acceptor) is an active-site residue. Coenzyme F420-(gamma-Glu)n-binding positions include Asn-113, 178 to 179 (GG), and 181 to 182 (VV). Residues Thr-196, Lys-199, Lys-260, and Arg-284 each coordinate substrate.

This sequence belongs to the F420-dependent glucose-6-phosphate dehydrogenase family. As to quaternary structure, homodimer.

It catalyses the reaction oxidized coenzyme F420-(gamma-L-Glu)(n) + D-glucose 6-phosphate + H(+) = 6-phospho-D-glucono-1,5-lactone + reduced coenzyme F420-(gamma-L-Glu)(n). Its function is as follows. Catalyzes the coenzyme F420-dependent oxidation of glucose 6-phosphate (G6P) to 6-phosphogluconolactone. This Rhodococcus hoagii (strain 103S) (Rhodococcus equi) protein is F420-dependent glucose-6-phosphate dehydrogenase.